A 103-amino-acid polypeptide reads, in one-letter code: MQPNDITFFQRFQNDILTGRKTITIRDASESHFKAGDVLRVGRFEDDGYFCTIEVTGTSTVTLDTLNEKHAQQENMSLDELKRVIAEIYPNQMQFYVIDFKCL.

The ASCH domain occupies 6–100; sequence ITFFQRFQND…NQMQFYVIDF (95 aa). The active-site Proton acceptor is the Lys-21. Thr-24 acts as the Nucleophile in catalysis. The Proton donor role is filled by Glu-74.

The protein belongs to the N(4)-acetylcytidine amidohydrolase family.

The enzyme catalyses N(4)-acetylcytidine + H2O = cytidine + acetate + H(+). It carries out the reaction N(4)-acetyl-2'-deoxycytidine + H2O = 2'-deoxycytidine + acetate + H(+). It catalyses the reaction N(4)-acetylcytosine + H2O = cytosine + acetate + H(+). Functionally, catalyzes the hydrolysis of N(4)-acetylcytidine (ac4C). The polypeptide is N(4)-acetylcytidine amidohydrolase (yqfB) (Salmonella arizonae (strain ATCC BAA-731 / CDC346-86 / RSK2980)).